A 297-amino-acid chain; its full sequence is Acetyl-coenzyme A carboxylase carboxyl transferase subunit beta (297 aa).

A CoA carboxyltransferase N-terminal domain is found at 25-294 (LWVKCPETGQ…VPPKGRLPAP (270 aa)).

Belongs to the AccD/PCCB family. In terms of assembly, acetyl-CoA carboxylase is a heterohexamer composed of biotin carboxyl carrier protein (AccB), biotin carboxylase (AccC) and two subunits each of ACCase subunit alpha (AccA) and ACCase subunit beta (AccD).

The protein resides in the cytoplasm. The catalysed reaction is N(6)-carboxybiotinyl-L-lysyl-[protein] + acetyl-CoA = N(6)-biotinyl-L-lysyl-[protein] + malonyl-CoA. The protein operates within lipid metabolism; malonyl-CoA biosynthesis; malonyl-CoA from acetyl-CoA: step 1/1. Functionally, component of the acetyl coenzyme A carboxylase (ACC) complex. Biotin carboxylase (BC) catalyzes the carboxylation of biotin on its carrier protein (BCCP) and then the CO(2) group is transferred by the transcarboxylase to acetyl-CoA to form malonyl-CoA. In Azorhizobium caulinodans (strain ATCC 43989 / DSM 5975 / JCM 20966 / LMG 6465 / NBRC 14845 / NCIMB 13405 / ORS 571), this protein is Acetyl-coenzyme A carboxylase carboxyl transferase subunit beta.